The sequence spans 212 residues: Large ribosomal subunit protein uL4 (212 aa).

It belongs to the universal ribosomal protein uL4 family. In terms of assembly, part of the 50S ribosomal subunit.

Its function is as follows. One of the primary rRNA binding proteins, this protein initially binds near the 5'-end of the 23S rRNA. It is important during the early stages of 50S assembly. It makes multiple contacts with different domains of the 23S rRNA in the assembled 50S subunit and ribosome. Functionally, forms part of the polypeptide exit tunnel. This chain is Large ribosomal subunit protein uL4, found in Phenylobacterium zucineum (strain HLK1).